The primary structure comprises 351 residues: MKNKKLLVMAGGTGGHVFPAIAVAQTLQKQEWDICWLGTKDRMEAQLVPKYGIPIRFIQISGLRGKGIKALLNAPFAIFRAVLQAKKIIQEEKPDAVLGMGGYVSGPAGVAAKLCGVPIILHEQNAIAGLTNKLLGKIATCVLQAFPTAFPHAEVVGNPVREDLFEMPNPDIRFSDREEKLRVLVVGGSQGARVLNHTLPKVVAQLADKLELRHQVGKGAVEEVSQLYGENLEQVKITEFIDNMAEAYAWADVVICRSGALTVCEIAAVGVAAIFVPFQHKDRQQYLNAKYLSDVDAAKIIEQADLTPEMLVNYLKNLTRENLLQMALKAKTMSMPNAAQRVAEVIKQYSN.

UDP-N-acetyl-alpha-D-glucosamine is bound by residues 13–15 (TGG), asparagine 125, arginine 161, serine 189, isoleucine 241, 260–265 (ALTVCE), and glutamine 285.

The protein belongs to the glycosyltransferase 28 family. MurG subfamily.

The protein localises to the cell inner membrane. The catalysed reaction is di-trans,octa-cis-undecaprenyl diphospho-N-acetyl-alpha-D-muramoyl-L-alanyl-D-glutamyl-meso-2,6-diaminopimeloyl-D-alanyl-D-alanine + UDP-N-acetyl-alpha-D-glucosamine = di-trans,octa-cis-undecaprenyl diphospho-[N-acetyl-alpha-D-glucosaminyl-(1-&gt;4)]-N-acetyl-alpha-D-muramoyl-L-alanyl-D-glutamyl-meso-2,6-diaminopimeloyl-D-alanyl-D-alanine + UDP + H(+). The protein operates within cell wall biogenesis; peptidoglycan biosynthesis. In terms of biological role, cell wall formation. Catalyzes the transfer of a GlcNAc subunit on undecaprenyl-pyrophosphoryl-MurNAc-pentapeptide (lipid intermediate I) to form undecaprenyl-pyrophosphoryl-MurNAc-(pentapeptide)GlcNAc (lipid intermediate II). This is UDP-N-acetylglucosamine--N-acetylmuramyl-(pentapeptide) pyrophosphoryl-undecaprenol N-acetylglucosamine transferase from Haemophilus influenzae (strain 86-028NP).